The primary structure comprises 490 residues: GTPase Der (490 aa).

EngA-type G domains follow at residues Pro3–Leu166 and Ile203–Thr376. GTP-binding positions include Gly9 to Ser16, Asp56 to Ile60, Asn118 to Asp121, Gly209 to Ser216, Asp256 to Val260, and Asn321 to Asp324. In terms of domain architecture, KH-like spans Arg377–Glu461.

This sequence belongs to the TRAFAC class TrmE-Era-EngA-EngB-Septin-like GTPase superfamily. EngA (Der) GTPase family. In terms of assembly, associates with the 50S ribosomal subunit.

Functionally, GTPase that plays an essential role in the late steps of ribosome biogenesis. This is GTPase Der from Escherichia coli O157:H7.